The following is a 152-amino-acid chain: Superoxide dismutase [Cu-Zn] (152 aa).

Ser-2 is modified (N-acetylserine). Cu cation contacts are provided by His-44, His-46, and His-61. Cys-55 and Cys-144 are joined by a disulfide. Zn(2+) contacts are provided by His-61, His-69, His-78, and Asp-81. His-118 contributes to the Cu cation binding site.

This sequence belongs to the Cu-Zn superoxide dismutase family. In terms of assembly, monomer. Cu cation serves as cofactor. Requires Zn(2+) as cofactor.

The protein resides in the cytoplasm. It catalyses the reaction 2 superoxide + 2 H(+) = H2O2 + O2. Its activity is regulated as follows. Inhibited by KCN and diethyldithiocarbamate. Its function is as follows. Destroys radicals which are normally produced within the cells and which are toxic to biological systems. The plasma superoxide dismutase has phagocytosis-stimulating activity and may play an important role in the biological defenses of the organism. In Halocynthia roretzi (Sea squirt), this protein is Superoxide dismutase [Cu-Zn].